Reading from the N-terminus, the 173-residue chain is Alpha-crystallin A chain (173 aa).

An N-acetylmethionine modification is found at M1. The required for complex formation with BFSP1 and BFSP2 stretch occupies residues 1-63; sequence MDIAIQHPWF…RTVLDSGVSE (63 aa). Q6 bears the Deamidated glutamine; partial mark. A Phosphoserine modification is found at S45. Q50 is subject to Deamidated glutamine; partial. In terms of domain architecture, sHSP spans 52–162; it reads LFRTVLDSGV…GHSERAIPVS (111 aa). K70 is subject to N6-acetyllysine. H79 provides a ligand contact to Zn(2+). Deamidated glutamine; partial is present on Q90. K99 is modified (N6-acetyllysine). Zn(2+) is bound at residue H100. N101 carries the post-translational modification Deamidated asparagine; partial. The Zn(2+) site is built by E102 and H107. S122 carries the post-translational modification Phosphoserine. N123 is subject to Deamidated asparagine; partial. A disordered region spans residues 144-173; sequence PKVPSGVDAGHSERAIPVSREEKPSSAPTS. Residues 153–167 are compositionally biased toward basic and acidic residues; that stretch reads GHSERAIPVSREEKP. H154 serves as a coordination point for Zn(2+). O-linked (GlcNAc) serine glycosylation is present at S162.

The protein belongs to the small heat shock protein (HSP20) family. In terms of assembly, heteromer composed of three CRYAA and one CRYAB subunits. Inter-subunit bridging via zinc ions enhances stability, which is crucial as there is no protein turn over in the lens. Can also form homodimers and homotetramers (dimers of dimers) which serve as the building blocks of homooligomers. Within homooligomers, the zinc-binding motif is created from residues of 3 different molecules. His-100 and Glu-102 from one molecule are ligands of the zinc ion, and His-107 and His-154 residues from additional molecules complete the site with tetrahedral coordination geometry. Part of a complex required for lens intermediate filament formation composed of BFSP1, BFSP2 and CRYAA. Acetylation at Lys-70 may increase chaperone activity. Post-translationally, undergoes age-dependent proteolytical cleavage at the C-terminus.

It is found in the cytoplasm. It localises to the nucleus. In terms of biological role, contributes to the transparency and refractive index of the lens. Acts as a chaperone, preventing aggregation of various proteins under a wide range of stress conditions. Required for the correct formation of lens intermediate filaments as part of a complex composed of BFSP1, BFSP2 and CRYAA. The sequence is that of Alpha-crystallin A chain (CRYAA) from Sus scrofa (Pig).